We begin with the raw amino-acid sequence, 306 residues long: D-alanine--D-alanine ligase (306 aa).

The region spanning 101–303 is the ATP-grasp domain; it reads KYLWQGCGLP…FSQLVARILE (203 aa). 134–189 contributes to the ATP binding site; sequence IDALGLPLFVKPSREGSSVGISRVNQASELQAALQEAFRFDDEVLVEAFLSGPEYT. Asp257, Glu270, and Asn272 together coordinate Mg(2+).

The protein belongs to the D-alanine--D-alanine ligase family. Requires Mg(2+) as cofactor. The cofactor is Mn(2+).

Its subcellular location is the cytoplasm. The enzyme catalyses 2 D-alanine + ATP = D-alanyl-D-alanine + ADP + phosphate + H(+). Its pathway is cell wall biogenesis; peptidoglycan biosynthesis. Its function is as follows. Cell wall formation. The chain is D-alanine--D-alanine ligase from Erwinia tasmaniensis (strain DSM 17950 / CFBP 7177 / CIP 109463 / NCPPB 4357 / Et1/99).